A 330-amino-acid polypeptide reads, in one-letter code: NADH-quinone oxidoreductase subunit H (330 aa).

Transmembrane regions (helical) follow at residues alanine 3–leucine 23, proline 76–isoleucine 96, valine 118–glycine 138, glutamate 161–valine 181, alanine 188–isoleucine 208, phenylalanine 244–leucine 264, phenylalanine 272–tryptophan 292, and tryptophan 307–valine 327.

The protein belongs to the complex I subunit 1 family. In terms of assembly, NDH-1 is composed of 14 different subunits. Subunits NuoA, H, J, K, L, M, N constitute the membrane sector of the complex.

Its subcellular location is the cell inner membrane. It catalyses the reaction a quinone + NADH + 5 H(+)(in) = a quinol + NAD(+) + 4 H(+)(out). Functionally, NDH-1 shuttles electrons from NADH, via FMN and iron-sulfur (Fe-S) centers, to quinones in the respiratory chain. The immediate electron acceptor for the enzyme in this species is believed to be ubiquinone. Couples the redox reaction to proton translocation (for every two electrons transferred, four hydrogen ions are translocated across the cytoplasmic membrane), and thus conserves the redox energy in a proton gradient. This subunit may bind ubiquinone. The protein is NADH-quinone oxidoreductase subunit H of Nitratiruptor sp. (strain SB155-2).